Reading from the N-terminus, the 232-residue chain is Octanoyltransferase (232 aa).

The 184-residue stretch at 33–216 (GRAQDTVILL…HLVRALSNGS (184 aa)) folds into the BPL/LPL catalytic domain. Residues 71 to 78 (RGGRITWH), 146 to 148 (AIG), and 159 to 161 (GFA) contribute to the substrate site. C177 (acyl-thioester intermediate) is an active-site residue.

The protein belongs to the LipB family.

It is found in the cytoplasm. It carries out the reaction octanoyl-[ACP] + L-lysyl-[protein] = N(6)-octanoyl-L-lysyl-[protein] + holo-[ACP] + H(+). It functions in the pathway protein modification; protein lipoylation via endogenous pathway; protein N(6)-(lipoyl)lysine from octanoyl-[acyl-carrier-protein]: step 1/2. Functionally, catalyzes the transfer of endogenously produced octanoic acid from octanoyl-acyl-carrier-protein onto the lipoyl domains of lipoate-dependent enzymes. Lipoyl-ACP can also act as a substrate although octanoyl-ACP is likely to be the physiological substrate. The polypeptide is Octanoyltransferase (Clavibacter sepedonicus (Clavibacter michiganensis subsp. sepedonicus)).